We begin with the raw amino-acid sequence, 212 residues long: Pyridoxine/pyridoxamine 5'-phosphate oxidase (212 aa).

Substrate-binding positions include 8–11 (RREY) and lysine 66. FMN contacts are provided by residues 61–66 (RIVLLK), 76–77 (FT), arginine 82, lysine 83, and glutamine 105. Tyrosine 123, arginine 127, and serine 131 together coordinate substrate. Residues 140-141 (QS) and tryptophan 185 contribute to the FMN site. 191–193 (RLH) lines the substrate pocket. Arginine 195 serves as a coordination point for FMN.

The protein belongs to the pyridoxamine 5'-phosphate oxidase family. In terms of assembly, homodimer. The cofactor is FMN.

It carries out the reaction pyridoxamine 5'-phosphate + O2 + H2O = pyridoxal 5'-phosphate + H2O2 + NH4(+). The enzyme catalyses pyridoxine 5'-phosphate + O2 = pyridoxal 5'-phosphate + H2O2. It functions in the pathway cofactor metabolism; pyridoxal 5'-phosphate salvage; pyridoxal 5'-phosphate from pyridoxamine 5'-phosphate: step 1/1. Its pathway is cofactor metabolism; pyridoxal 5'-phosphate salvage; pyridoxal 5'-phosphate from pyridoxine 5'-phosphate: step 1/1. Functionally, catalyzes the oxidation of either pyridoxine 5'-phosphate (PNP) or pyridoxamine 5'-phosphate (PMP) into pyridoxal 5'-phosphate (PLP). This is Pyridoxine/pyridoxamine 5'-phosphate oxidase from Shewanella pealeana (strain ATCC 700345 / ANG-SQ1).